A 153-amino-acid polypeptide reads, in one-letter code: Ribosome maturation factor RimP (153 aa).

It belongs to the RimP family.

It localises to the cytoplasm. Required for maturation of 30S ribosomal subunits. In Clostridium botulinum (strain Langeland / NCTC 10281 / Type F), this protein is Ribosome maturation factor RimP.